The sequence spans 473 residues: MVVKKSRGSSQQLPGLGGQGGCTGFVGMLGTALLFISLPWGAQVMASANISTALGHTSGHYLSIGDGSVTEFDFPEKSEGIIVISSQYTGQTNGTGPSPILKVISLDTEVLTIKNVSAITWSSGGGFVVGIHSGLAGLAPLHLQLMDFYEAPPLLIEERRDFCIRVSPAEDLPSALNTNLGHFSENPILYLLLPLIFVNKCSFGCKVELEVLKELLQSPQPMLLGLLGQFLVMPFYAFLMAKVFMLPKALALGLIITCSSPGGGGSYLFSLLLGGDVTLAISMTFISTVAATGFLPLSSAIYSYLLSIHETLHVPISKILGTLLFIAIPIAAGVVIKSKLPKFSELLLQVIKPFSFILLLGGLFLAYHMGVFILVGVRLPIVLVGFTVPLVGLLVGYSLAICLKLPVAQRRTVSIEVGVQNSLLALAMLQLSLRRLQADYASQAPFIVALSGTSEMLALVIGQFIYSILFPVP.

Transmembrane regions (helical) follow at residues 25 to 45 (FVGMLGTALLFISLPWGAQVM), 221 to 241 (PMLLGLLGQFLVMPFYAFLMA), 249 to 269 (ALALGLIITCSSPGGGGSYLF), 277 to 297 (VTLAISMTFISTVAATGFLPL), 316 to 336 (ISKILGTLLFIAIPIAAGVVI), 356 to 376 (FILLLGGLFLAYHMGVFILVG), 381 to 401 (IVLVGFTVPLVGLLVGYSLAI), 413 to 433 (VSIEVGVQNSLLALAMLQLSL), and 446 to 466 (FIVALSGTSEMLALVIGQFIY).

This sequence belongs to the bile acid:sodium symporter (BASS) (TC 2.A.28) family.

It localises to the membrane. Functionally, the ubiquitous expression and the conservation of the sequence in distant animal species suggest that the gene codes for a protein with housekeeping functions. This Mus musculus (Mouse) protein is P3 protein (Slc10a3).